Here is a 284-residue protein sequence, read N- to C-terminus: Pantothenate synthetase (284 aa).

30-37 (MGNLHDGH) is a binding site for ATP. The Proton donor role is filled by His-37. Gln-61 contributes to the (R)-pantoate binding site. A beta-alanine-binding site is contributed by Gln-61. Residue 149-152 (GEKD) coordinates ATP. Position 155 (Gln-155) interacts with (R)-pantoate. Residues Ile-178 and 186–189 (LSSR) contribute to the ATP site.

Belongs to the pantothenate synthetase family. As to quaternary structure, homodimer.

Its subcellular location is the cytoplasm. It carries out the reaction (R)-pantoate + beta-alanine + ATP = (R)-pantothenate + AMP + diphosphate + H(+). Its pathway is cofactor biosynthesis; (R)-pantothenate biosynthesis; (R)-pantothenate from (R)-pantoate and beta-alanine: step 1/1. Its function is as follows. Catalyzes the condensation of pantoate with beta-alanine in an ATP-dependent reaction via a pantoyl-adenylate intermediate. This is Pantothenate synthetase from Salmonella paratyphi A (strain ATCC 9150 / SARB42).